The chain runs to 506 residues: Phenylacetaldehyde synthase (506 aa).

3 residues coordinate L-phenylalanine: proline 101, histidine 202, and histidine 317. Lysine 318 carries the N6-(pyridoxal phosphate)lysine modification.

It belongs to the group II decarboxylase family. As to quaternary structure, homotetramer. Requires pyridoxal 5'-phosphate as cofactor. In terms of tissue distribution, highly expressed in corolla limbs and at lower levels in corolla tubes and ovaries.

It catalyses the reaction L-phenylalanine + O2 + H2O + H(+) = 2-phenylacetaldehyde + H2O2 + NH4(+) + CO2. In terms of biological role, bifunctional enzyme that catalyzes the decarboxylation of L-phenylalanine to 2-phenylethylamine, which is then oxidized to form 2-phenylacetaldehyde, a constituent of floral scent. 2-phenylacetaldehyde is a precursor of 2-phenylethanol, another constituent of floral scent. In Petunia hybrida (Petunia), this protein is Phenylacetaldehyde synthase.